The sequence spans 362 residues: METINLEKPLYSLKKFYFPSEWSYPINKNYKHIKDTYNEGVSCGIFEASNEKHFAYANGVLNCVTWFYPKYDYEQCMVAASIMLWIFVLDDFLERDHMTDEKQQYCVKKYEDILIFGKDSSYISNIEYNDLTPLDKYSLILRKRLLNPTIHRIESFNIFIHYLREWFFSIIPLKKSKGNNHDSVPIEVYQFIRTINIGLFFVVGVNSVAVRTNVHGSFWLNPIWNRMVRSASRQIIIFNDCVSYAKELNHDCAGENCLYILQKKLNLPFEKVYSELIAEAKQCIFDIQNDEKLLIKSLSHISEEEMNGVIYLVEQLHEIICGNRDWALMTPRYIHKDSPFIETNGIDSLFVPYETILDPNLY.

Positions 90 to 95 (DDFLER) match the DDxx(x)D/E motif motif. The short motif at 239–247 (NDCVSYAKE) is the NDxxSxxxD/E motif element.

This sequence belongs to the terpene synthase family.

It catalyses the reaction (2E,6E)-farnesyl diphosphate = beta-maaliene + diphosphate. It carries out the reaction (2E,6E)-farnesyl diphosphate = aristolene + diphosphate. The catalysed reaction is (2E,6E)-farnesyl diphosphate = calarene + diphosphate. The enzyme catalyses (2E)-geranyl diphosphate = (E)-beta-ocimene + diphosphate. It catalyses the reaction (2E)-geranyl diphosphate = (Z)-beta-ocimene + diphosphate. It carries out the reaction (2E)-geranyl diphosphate + H2O = linalool + diphosphate. The catalysed reaction is (2E)-geranyl diphosphate = beta-myrcene + diphosphate. Functionally, terpene synthase that converts its substrate farnesyl diphosphate (FPP) into an unidentified sesquiterpene as a major product, as well as beta-maaliene, aristolene, calarene and 2 additional unidentified sesquiterpene as minor products. Is also able to convert geranyl diphosphate (GPP) into a mixture of monoterpenes including (Z)-beta-ocimene, (E)-beta-ocimene, allo-ocimene, linalool and beta-myrcene. This is Terpene synthase 3 from Dictyostelium discoideum (Social amoeba).